The primary structure comprises 319 residues: Probable NAD(P)H-dependent D-xylose reductase xyl1 (319 aa).

A glycan (N-linked (GlcNAc...) asparagine) is linked at N26. Y50 (proton donor) is an active-site residue. Position 112 (H112) interacts with substrate. N141 and N167 each carry an N-linked (GlcNAc...) asparagine glycan. NAD(+) contacts are provided by residues 166–167, 215–224, and 271–281; these read SN, SSFGPLSFLE, and KSNNPQRLKQN.

Belongs to the aldo/keto reductase family.

It catalyses the reaction xylitol + NAD(+) = D-xylose + NADH + H(+). The enzyme catalyses xylitol + NADP(+) = D-xylose + NADPH + H(+). The protein operates within carbohydrate metabolism; D-xylose degradation. In terms of biological role, catalyzes the initial reaction in the xylose utilization pathway by reducing D-xylose into xylitol. Xylose is a major component of hemicelluloses such as xylan. Most fungi utilize D-xylose via three enzymatic reactions, xylose reductase (XR), xylitol dehydrogenase (XDH), and xylulokinase, to form xylulose 5-phosphate, which enters pentose phosphate pathway. The chain is Probable NAD(P)H-dependent D-xylose reductase xyl1 (xyl1) from Aspergillus niger (strain ATCC MYA-4892 / CBS 513.88 / FGSC A1513).